The primary structure comprises 399 residues: Zinc metalloproteinase nas-25 (399 aa).

Residues 1-20 (MQIYLGITICLVAFLTVIDC) form the signal peptide. Positions 41 to 237 (QVQRDLTYRW…DQINQYYQCY (197 aa)) constitute a Peptidase M12A domain. Asn52 and Asn61 each carry an N-linked (GlcNAc...) asparagine glycan. Intrachain disulfides connect Cys82–Cys236, Cys106–Cys126, Cys240–Cys260, and Cys265–Cys274. His134 is a binding site for Zn(2+). Residue Glu135 is part of the active site. 2 residues coordinate Zn(2+): His138 and His144. Residues 232–275 (QYYQCYDSCRNAGQLANCANGGIPNPNNCQVCNCPMGYGGDLCD) form the EGF-like domain. The N-linked (GlcNAc...) asparagine glycan is linked to Asn371.

Requires Zn(2+) as cofactor. Expressed in pharyngeal muscles, pharyngeal-intestinal valve, rectal gland cells and arcade cells.

It localises to the secreted. Metalloprotease. The sequence is that of Zinc metalloproteinase nas-25 (nas-25) from Caenorhabditis elegans.